The primary structure comprises 195 residues: ATP-dependent Clp protease proteolytic subunit (195 aa).

Ser98 (nucleophile) is an active-site residue. His123 is a catalytic residue.

This sequence belongs to the peptidase S14 family. As to quaternary structure, fourteen ClpP subunits assemble into 2 heptameric rings which stack back to back to give a disk-like structure with a central cavity, resembling the structure of eukaryotic proteasomes.

It is found in the cytoplasm. It catalyses the reaction Hydrolysis of proteins to small peptides in the presence of ATP and magnesium. alpha-casein is the usual test substrate. In the absence of ATP, only oligopeptides shorter than five residues are hydrolyzed (such as succinyl-Leu-Tyr-|-NHMec, and Leu-Tyr-Leu-|-Tyr-Trp, in which cleavage of the -Tyr-|-Leu- and -Tyr-|-Trp bonds also occurs).. In terms of biological role, cleaves peptides in various proteins in a process that requires ATP hydrolysis. Has a chymotrypsin-like activity. Plays a major role in the degradation of misfolded proteins. In Helicobacter pylori (strain G27), this protein is ATP-dependent Clp protease proteolytic subunit.